The primary structure comprises 312 residues: Ribosomal RNA small subunit methyltransferase H (312 aa).

Residues 1-24 are disordered; sequence MNIMTANQGAVSPSQTESEASPPT. S-adenosyl-L-methionine is bound by residues 55-57, Asp72, Tyr96, Asp117, and Gln124; that span reads AGH. The tract at residues 288 to 312 is disordered; sequence EQVDNPRARSAKLRVGERAAAPEGS.

The protein belongs to the methyltransferase superfamily. RsmH family.

Its subcellular location is the cytoplasm. The enzyme catalyses cytidine(1402) in 16S rRNA + S-adenosyl-L-methionine = N(4)-methylcytidine(1402) in 16S rRNA + S-adenosyl-L-homocysteine + H(+). Specifically methylates the N4 position of cytidine in position 1402 (C1402) of 16S rRNA. The sequence is that of Ribosomal RNA small subunit methyltransferase H from Deinococcus radiodurans (strain ATCC 13939 / DSM 20539 / JCM 16871 / CCUG 27074 / LMG 4051 / NBRC 15346 / NCIMB 9279 / VKM B-1422 / R1).